We begin with the raw amino-acid sequence, 518 residues long: Serine--tRNA ligase, mitochondrial (518 aa).

The transit peptide at 1 to 34 (MAASMARLWWPFLARQGLRSRGRCVCSQNPRRSF) directs the protein to the mitochondrion. Residue Lys-110 is modified to N6-acetyllysine. Lys-195 is modified (N6-succinyllysine). Residue 299-301 (TAE) participates in L-serine binding. Residue 330-332 (RAE) coordinates ATP. Lys-337 carries the N6-succinyllysine modification. Val-345 contacts ATP. Glu-352 is an L-serine binding site. Position 418–421 (418–421 (EVTS)) interacts with ATP. Thr-453 contributes to the L-serine binding site. The segment at 497–518 (PLQYIGPNQPQKPRLPGQSATR) is disordered.

It belongs to the class-II aminoacyl-tRNA synthetase family. Type-1 seryl-tRNA synthetase subfamily. As to quaternary structure, homodimer. The tRNA molecule probably binds across the dimer. In terms of tissue distribution, ubiquitous.

It is found in the mitochondrion matrix. It catalyses the reaction tRNA(Ser) + L-serine + ATP = L-seryl-tRNA(Ser) + AMP + diphosphate + H(+). It carries out the reaction tRNA(Sec) + L-serine + ATP = L-seryl-tRNA(Sec) + AMP + diphosphate + H(+). It participates in aminoacyl-tRNA biosynthesis; selenocysteinyl-tRNA(Sec) biosynthesis; L-seryl-tRNA(Sec) from L-serine and tRNA(Sec): step 1/1. Its function is as follows. Catalyzes the attachment of serine to tRNA(Ser). Is also probably able to aminoacylate tRNA(Sec) with serine, to form the misacylated tRNA L-seryl-tRNA(Sec), which will be further converted into selenocysteinyl-tRNA(Sec). The polypeptide is Serine--tRNA ligase, mitochondrial (Sars2) (Mus musculus (Mouse)).